We begin with the raw amino-acid sequence, 298 residues long: Cyclin-dependent kinase 1 (298 aa).

S2 carries the N-acetylserine modification. One can recognise a Protein kinase domain in the interval 8-295 (YKRLEKVGEG…ARRAAIHPYF (288 aa)). Residues 14–22 (VGEGTYGVV) and K40 each bind ATP. Residue Y19 is modified to Phosphotyrosine. D136 acts as the Proton acceptor in catalysis. The residue at position 169 (T169) is a Phosphothreonine.

This sequence belongs to the protein kinase superfamily. CMGC Ser/Thr protein kinase family. CDC2/CDKX subfamily. As to quaternary structure, forms a stable but non-covalent complex with the CKS1 protein and with a cyclin.

It catalyses the reaction L-seryl-[protein] + ATP = O-phospho-L-seryl-[protein] + ADP + H(+). The enzyme catalyses L-threonyl-[protein] + ATP = O-phospho-L-threonyl-[protein] + ADP + H(+). Phosphorylation at Thr-18 or Tyr-19 inactivates the enzyme, while phosphorylation at Thr-169 activates it. Its function is as follows. Cyclin-dependent kinase that acts as a master regulator of the mitotic and meiotic cell cycles. Required to drive the G1-S transition. More than 200 substrates have been identified. Substrate specificity is in part regulated by the bound cyclin protein. Phosphorylates YTA7 during S-phase to promote transcription of histones. May phosphorylate CNN1, to contribute to the enrichment of CNN1 on anaphase kinetochores. This is Cyclin-dependent kinase 1 from Saccharomyces cerevisiae (strain ATCC 204508 / S288c) (Baker's yeast).